We begin with the raw amino-acid sequence, 428 residues long: Serine--tRNA ligase (428 aa).

231 to 233 (TAE) contacts L-serine. 262–264 (RAE) is an ATP binding site. L-serine is bound at residue Glu-285. Position 349-352 (349-352 (EISS)) interacts with ATP. Ser-385 is a binding site for L-serine.

The protein belongs to the class-II aminoacyl-tRNA synthetase family. Type-1 seryl-tRNA synthetase subfamily. In terms of assembly, homodimer. The tRNA molecule binds across the dimer.

It is found in the cytoplasm. The enzyme catalyses tRNA(Ser) + L-serine + ATP = L-seryl-tRNA(Ser) + AMP + diphosphate + H(+). The catalysed reaction is tRNA(Sec) + L-serine + ATP = L-seryl-tRNA(Sec) + AMP + diphosphate + H(+). Its pathway is aminoacyl-tRNA biosynthesis; selenocysteinyl-tRNA(Sec) biosynthesis; L-seryl-tRNA(Sec) from L-serine and tRNA(Sec): step 1/1. Functionally, catalyzes the attachment of serine to tRNA(Ser). Is also able to aminoacylate tRNA(Sec) with serine, to form the misacylated tRNA L-seryl-tRNA(Sec), which will be further converted into selenocysteinyl-tRNA(Sec). The chain is Serine--tRNA ligase from Methylorubrum extorquens (strain CM4 / NCIMB 13688) (Methylobacterium extorquens).